Consider the following 448-residue polypeptide: Probable glycine dehydrogenase (decarboxylating) subunit 1 (448 aa).

Belongs to the GcvP family. N-terminal subunit subfamily. In terms of assembly, the glycine cleavage system is composed of four proteins: P, T, L and H. In this organism, the P 'protein' is a heterodimer of two subunits.

It carries out the reaction N(6)-[(R)-lipoyl]-L-lysyl-[glycine-cleavage complex H protein] + glycine + H(+) = N(6)-[(R)-S(8)-aminomethyldihydrolipoyl]-L-lysyl-[glycine-cleavage complex H protein] + CO2. Its function is as follows. The glycine cleavage system catalyzes the degradation of glycine. The P protein binds the alpha-amino group of glycine through its pyridoxal phosphate cofactor; CO(2) is released and the remaining methylamine moiety is then transferred to the lipoamide cofactor of the H protein. This is Probable glycine dehydrogenase (decarboxylating) subunit 1 from Staphylococcus epidermidis (strain ATCC 35984 / DSM 28319 / BCRC 17069 / CCUG 31568 / BM 3577 / RP62A).